A 263-amino-acid chain; its full sequence is Thymidylate synthase (263 aa).

DUMP is bound by residues R25 and R123–R124. C143 acts as the Nucleophile in catalysis. Residues R163–D166, N174, and H204–Y206 contribute to the dUMP site. Position 166 (D166) interacts with (6R)-5,10-methylene-5,6,7,8-tetrahydrofolate. S262 contributes to the (6R)-5,10-methylene-5,6,7,8-tetrahydrofolate binding site.

It belongs to the thymidylate synthase family. Bacterial-type ThyA subfamily. As to quaternary structure, homodimer.

It is found in the cytoplasm. The catalysed reaction is dUMP + (6R)-5,10-methylene-5,6,7,8-tetrahydrofolate = 7,8-dihydrofolate + dTMP. Its pathway is pyrimidine metabolism; dTTP biosynthesis. In terms of biological role, catalyzes the reductive methylation of 2'-deoxyuridine-5'-monophosphate (dUMP) to 2'-deoxythymidine-5'-monophosphate (dTMP) while utilizing 5,10-methylenetetrahydrofolate (mTHF) as the methyl donor and reductant in the reaction, yielding dihydrofolate (DHF) as a by-product. This enzymatic reaction provides an intracellular de novo source of dTMP, an essential precursor for DNA biosynthesis. This is Thymidylate synthase from Clostridium beijerinckii (strain ATCC 51743 / NCIMB 8052) (Clostridium acetobutylicum).